The following is a 176-amino-acid chain: Large ribosomal subunit protein uL5 (176 aa).

The protein belongs to the universal ribosomal protein uL5 family. In terms of assembly, part of the 50S ribosomal subunit; contacts the 5S rRNA and probably tRNA. Forms a bridge to the 30S subunit in the 70S ribosome.

This is one of the proteins that bind and probably mediate the attachment of the 5S RNA into the large ribosomal subunit, where it forms part of the central protuberance. In the 70S ribosome it contacts protein S13 of the 30S subunit (bridge B1b), connecting the 2 subunits; this bridge is implicated in subunit movement. May contact the P site tRNA; the 5S rRNA and some of its associated proteins might help stabilize positioning of ribosome-bound tRNAs. The protein is Large ribosomal subunit protein uL5 of Picrophilus torridus (strain ATCC 700027 / DSM 9790 / JCM 10055 / NBRC 100828 / KAW 2/3).